A 442-amino-acid polypeptide reads, in one-letter code: D-serine dehydratase (442 aa).

Residue lysine 118 is modified to N6-(pyridoxal phosphate)lysine.

It belongs to the serine/threonine dehydratase family. DsdA subfamily. As to quaternary structure, monomer. Pyridoxal 5'-phosphate is required as a cofactor.

The enzyme catalyses D-serine = pyruvate + NH4(+). In Escherichia coli (strain K12 / MC4100 / BW2952), this protein is D-serine dehydratase.